A 150-amino-acid polypeptide reads, in one-letter code: D-aminoacyl-tRNA deacylase (150 aa).

The Gly-cisPro motif, important for rejection of L-amino acids motif lies at 138–139; the sequence is GP.

This sequence belongs to the DTD family. As to quaternary structure, homodimer.

Its subcellular location is the cytoplasm. The catalysed reaction is glycyl-tRNA(Ala) + H2O = tRNA(Ala) + glycine + H(+). It catalyses the reaction a D-aminoacyl-tRNA + H2O = a tRNA + a D-alpha-amino acid + H(+). Functionally, an aminoacyl-tRNA editing enzyme that deacylates mischarged D-aminoacyl-tRNAs. Also deacylates mischarged glycyl-tRNA(Ala), protecting cells against glycine mischarging by AlaRS. Acts via tRNA-based rather than protein-based catalysis; rejects L-amino acids rather than detecting D-amino acids in the active site. By recycling D-aminoacyl-tRNA to D-amino acids and free tRNA molecules, this enzyme counteracts the toxicity associated with the formation of D-aminoacyl-tRNA entities in vivo and helps enforce protein L-homochirality. This is D-aminoacyl-tRNA deacylase from Azobacteroides pseudotrichonymphae genomovar. CFP2.